The chain runs to 486 residues: N-succinylglutamate 5-semialdehyde dehydrogenase (486 aa).

An NAD(+)-binding site is contributed by 220 to 225 (GSSRTG). Residues Glu243 and Cys277 contribute to the active site.

Belongs to the aldehyde dehydrogenase family. AstD subfamily.

It carries out the reaction N-succinyl-L-glutamate 5-semialdehyde + NAD(+) + H2O = N-succinyl-L-glutamate + NADH + 2 H(+). It functions in the pathway amino-acid degradation; L-arginine degradation via AST pathway; L-glutamate and succinate from L-arginine: step 4/5. Catalyzes the NAD-dependent reduction of succinylglutamate semialdehyde into succinylglutamate. The sequence is that of N-succinylglutamate 5-semialdehyde dehydrogenase from Shewanella halifaxensis (strain HAW-EB4).